Here is a 512-residue protein sequence, read N- to C-terminus: SNF1-related protein kinase catalytic subunit alpha KIN11 (512 aa).

One can recognise a Protein kinase domain in the interval 20–272 (YKLGKTLGIG…IPEIRQHRWF (253 aa)). ATP-binding positions include 26–34 (LGIGSFGKV) and Lys-49. Asp-143 functions as the Proton acceptor in the catalytic mechanism. Ser-165 is modified (phosphoserine). At Thr-176 the chain carries Phosphothreonine; by GRIK1 or GRIK2. Residues 291–391 (AKKINEEIVQ…GARSQVPVDR (101 aa)) form an auto-inhibitory domain (AID) region. The UBA domain maps to 293–333 (KINEEIVQEVVNMGFDRNQVLESLRNRTQNDATVTYYLLLD). The regulatory domain (RD) stretch occupies residues 295 to 512 (NEEIVQEVVN…AAFLTELRVI (218 aa)). The interval 392–512 (KWALGLQSHA…AAFLTELRVI (121 aa)) is PPI. Positions 399–512 (SHAHPREIMN…AAFLTELRVI (114 aa)) are interaction with PAD1 and SKP1. Residues 463-511 (AMTSPTVIKFELQLYKAREEKYLLDIQRVNGPQFLFLDLCAAFLTELRV) form the KA1 domain.

It belongs to the protein kinase superfamily. CAMK Ser/Thr protein kinase family. SNF1 subfamily. As to quaternary structure, subunit of a probable heterotrimeric complex consisting of an alpha catalytic (KIN10 or KIN11) subunit, and a beta (KINB) and a gamma (KING or SNF4) non-catalytic regulatory subunits. Interacts with KINB2, KINB3, SNF4 and probably with KINB1 and KING1. Interacts with SKP1/ASK1, PAD1 and the N-terminus of PRL1. Potential subunit of a SCF ubiquitin ligase complex consisting of a SNF1-related protein kinase, SKP1 and CUL1. The association of the SCF complex with the proteasome may be mediated by PAD1 and seems to be inhibited by the interaction with PRL1. Interacts with DSP4. Interacts with the begomovirus AL2 protein and the curtovirus L2 protein. Interacts with ATAF1. Interacts with CIPK14. Interacts with FLZ proteins through their FLZ-type zinc finger domains. Interacts with GEBP/STKR1. Interacts with REM4.1 and REM4.2. Interacts with ADK2. Interacts with IDD8. Interacts with FLZ3, FLZ9, TCP3, TCP13, HB21/ZHD3 and HB23/ZHD10. Interacts with WRI1. Interacts with IPK2b. Interacts with FLZ6 and FLZ10. In terms of processing, sumoylated by SIZ1. Post-translationally, phosphorylated at Thr-176 under submergence. Autophosphorylated. Phosphorylated at Thr-176 by GRIK1/SNAK2 and GRIK2/SNAK1. As to expression, expressed in roots, shoots, flower buds, flowers, siliques and leaves. Restrictly expressed to the base of the leaf, the vascular tissue, and the hydathodes.

The protein localises to the plastid. It localises to the chloroplast. It is found in the cytoplasm. Its subcellular location is the endoplasmic reticulum. It catalyses the reaction L-seryl-[protein] + ATP = O-phospho-L-seryl-[protein] + ADP + H(+). The catalysed reaction is L-threonyl-[protein] + ATP = O-phospho-L-threonyl-[protein] + ADP + H(+). With respect to regulation, inactivated by the begomovirus AL2 protein or the curtovirus L2 protein. Activated by phosphorylation at Thr-176 by GRIK1/SNAK2 and GRIK2/SNAK1. Inhibited by trehalose-6-phosphate. In terms of biological role, catalytic subunit of the probable trimeric SNF1-related protein kinase (SnRK) complex, a central regulator of cellular energy homeostasis, which, in response to seemingly unrelated darkness, sugar and stress conditions, activates energy-producing pathways and inhibits energy-consuming processes. May play a role in a signal transduction cascade regulating gene expression and carbohydrate metabolism in higher plants. The SnRK complex may also be involved in the regulation of fatty acid synthesis by phosphorylation of acetyl-CoA carboxylase and in assimilation of nitrogen by phosphorylating nitrate reductase. In vitro, KIN11 exhibits kinase activity on sucrose phosphate synthase and the kinase activity is inhibited by PRL1. May be a subunit of a SCF ubiquitin ligase complex and thus be involved in proteasomal ubiquitination. Involved in innate antiviral defenses. Phosphorylates REM4.1 in vitro. Phosphorylates ADK2 in vitro. The chain is SNF1-related protein kinase catalytic subunit alpha KIN11 from Arabidopsis thaliana (Mouse-ear cress).